The sequence spans 434 residues: Nicotinate phosphoribosyltransferase (434 aa).

Histidine 242 is subject to Phosphohistidine; by autocatalysis.

Belongs to the NAPRTase family. Post-translationally, transiently phosphorylated on a His residue during the reaction cycle. Phosphorylation strongly increases the affinity for substrates and increases the rate of nicotinate D-ribonucleotide production. Dephosphorylation regenerates the low-affinity form of the enzyme, leading to product release.

The enzyme catalyses nicotinate + 5-phospho-alpha-D-ribose 1-diphosphate + ATP + H2O = nicotinate beta-D-ribonucleotide + ADP + phosphate + diphosphate. It participates in cofactor biosynthesis; NAD(+) biosynthesis; nicotinate D-ribonucleotide from nicotinate: step 1/1. In terms of biological role, catalyzes the synthesis of beta-nicotinate D-ribonucleotide from nicotinate and 5-phospho-D-ribose 1-phosphate at the expense of ATP. This Agrobacterium fabrum (strain C58 / ATCC 33970) (Agrobacterium tumefaciens (strain C58)) protein is Nicotinate phosphoribosyltransferase.